Reading from the N-terminus, the 191-residue chain is MTEVQQTEKVTPRLKTKYREEIRGALQEQFQYGNVMQVPGLVKVVVNMGVGEAAKDSKIIDGAVTDLTAITGQKPMITKARKSIAQFKLREGMPIGTHATLRGDRMWEFLDRLVTLALPRIRDFRGLSDRQFDGNGNYTFGLSEQTVFHEIDQDKIDRVRGMDITVVTTAKNDDEGRALLKALGFPFKTDQ.

The protein belongs to the universal ribosomal protein uL5 family. Part of the 50S ribosomal subunit; part of the 5S rRNA/L5/L18/L25 subcomplex. Contacts the 5S rRNA and the P site tRNA. Forms a bridge to the 30S subunit in the 70S ribosome.

Functionally, this is one of the proteins that bind and probably mediate the attachment of the 5S RNA into the large ribosomal subunit, where it forms part of the central protuberance. In the 70S ribosome it contacts protein S13 of the 30S subunit (bridge B1b), connecting the 2 subunits; this bridge is implicated in subunit movement. Contacts the P site tRNA; the 5S rRNA and some of its associated proteins might help stabilize positioning of ribosome-bound tRNAs. The sequence is that of Large ribosomal subunit protein uL5 from Micrococcus luteus (strain ATCC 4698 / DSM 20030 / JCM 1464 / CCM 169 / CCUG 5858 / IAM 1056 / NBRC 3333 / NCIMB 9278 / NCTC 2665 / VKM Ac-2230) (Micrococcus lysodeikticus).